Here is a 469-residue protein sequence, read N- to C-terminus: Secreted triacylglycerol lipase LIP3 (469 aa).

Residues 1–21 (MVSLLWKFTLLCLFLLACTSA) form the signal peptide. A disulfide bond links cysteine 121 and cysteine 292. Serine 205 acts as the Nucleophile in catalysis. Residue asparagine 238 is glycosylated (N-linked (GlcNAc...) asparagine). Residues aspartate 352 and histidine 386 contribute to the active site.

It belongs to the AB hydrolase superfamily. Lipase family. Class Lip subfamily.

It localises to the secreted. The catalysed reaction is a triacylglycerol + H2O = a diacylglycerol + a fatty acid + H(+). It carries out the reaction a monoacylglycerol + H2O = glycerol + a fatty acid + H(+). It catalyses the reaction a diacylglycerol + H2O = a monoacylglycerol + a fatty acid + H(+). In terms of biological role, secreted lipase that hydrolyzes acylglycerol lipids such as triacylglycerols and consequently releases free fatty acid. Generates free oleic acid from the substrates mono- and diolein and hydrolyzes triolein in significant amounts. Due to an absence of fatty acid synthase genes in Malassezia species, secretory lipases are essential for the yeast to generate free fatty acids from degradation of sebum and assimilate them as lipid sources for growth. Plays an essential role at the pathogen-host interface during disease progression. Performs also the reverse reaction to build diacyl- and triacyl- glycerols from monoacylglycerols. In Malassezia restricta (strain ATCC 96810 / NBRC 103918 / CBS 7877) (Seborrheic dermatitis infection agent), this protein is Secreted triacylglycerol lipase LIP3.